The primary structure comprises 208 residues: Cytidylate kinase (208 aa).

Residue 9 to 17 coordinates ATP; it reads GPSASGKSS.

It belongs to the cytidylate kinase family. Type 1 subfamily.

It localises to the cytoplasm. It catalyses the reaction CMP + ATP = CDP + ADP. It carries out the reaction dCMP + ATP = dCDP + ADP. The protein is Cytidylate kinase of Thermus thermophilus (strain ATCC BAA-163 / DSM 7039 / HB27).